The following is a 225-amino-acid chain: Cardiotrophin-like cytokine factor 1 (225 aa).

The signal sequence occupies residues 1 to 27 (MDLRAGDSWGMLACLCTVLWHLPAVPA). A glycan (N-linked (GlcNAc...) asparagine) is linked at Asn29.

It belongs to the IL-6 superfamily. In terms of assembly, forms a heteromeric complex with cardiotrophin-like cytokine CRLF1/CLF-1; the CRLF1-CLCF1 complex is a ligand for the ciliary neurotrophic factor receptor/CNTFR. The CRLF1-CLCF1 heterodimer binds SORL1 (via N-terminal ectodomain); within this complex, the interaction is mediated predominantly by the CRLF1 moiety. The tripartite signaling complex formed by CRLF1, CLCF1 and CNTFR also binds SORL1. In terms of tissue distribution, expressed predominantly in lymph nodes, spleen, peripheral blood lymphocytes, bone marrow, and fetal liver.

It localises to the secreted. In terms of biological role, in complex with CRLF1, forms a heterodimeric neurotropic cytokine that plays a crucial role during neuronal development. Also stimulates B-cells. Binds to and activates the ILST/gp130 receptor. This Homo sapiens (Human) protein is Cardiotrophin-like cytokine factor 1 (CLCF1).